Reading from the N-terminus, the 46-residue chain is Large ribosomal subunit protein bL36 (46 aa).

The protein belongs to the bacterial ribosomal protein bL36 family.

This Escherichia coli O7:K1 (strain IAI39 / ExPEC) protein is Large ribosomal subunit protein bL36.